The sequence spans 104 residues: Large ribosomal subunit protein bL21 (104 aa).

The protein belongs to the bacterial ribosomal protein bL21 family. As to quaternary structure, part of the 50S ribosomal subunit. Contacts protein L20.

This protein binds to 23S rRNA in the presence of protein L20. This is Large ribosomal subunit protein bL21 from Leptospira borgpetersenii serovar Hardjo-bovis (strain JB197).